The following is a 230-amino-acid chain: Large ribosomal subunit protein uL1 (230 aa).

This sequence belongs to the universal ribosomal protein uL1 family. In terms of assembly, part of the 50S ribosomal subunit.

Its function is as follows. Binds directly to 23S rRNA. The L1 stalk is quite mobile in the ribosome, and is involved in E site tRNA release. Protein L1 is also a translational repressor protein, it controls the translation of the L11 operon by binding to its mRNA. This is Large ribosomal subunit protein uL1 from Nitrosomonas europaea (strain ATCC 19718 / CIP 103999 / KCTC 2705 / NBRC 14298).